The following is a 103-amino-acid chain: Small ribosomal subunit protein uS10 (103 aa).

The protein belongs to the universal ribosomal protein uS10 family. Part of the 30S ribosomal subunit.

Involved in the binding of tRNA to the ribosomes. The sequence is that of Small ribosomal subunit protein uS10 from Chlorobaculum tepidum (strain ATCC 49652 / DSM 12025 / NBRC 103806 / TLS) (Chlorobium tepidum).